Here is a 449-residue protein sequence, read N- to C-terminus: Mitochondrial distribution and morphology protein 10 (449 aa).

2 disordered regions span residues Gly-215–Asp-244 and Asp-282–Ser-307. A compositionally biased stretch (low complexity) spans Pro-285 to Leu-301.

The protein belongs to the MDM10 family. In terms of assembly, component of the ER-mitochondria encounter structure (ERMES) or MDM complex, composed of MMM1, MDM10, MDM12 and MDM34. Associates with the mitochondrial outer membrane sorting assembly machinery SAM(core) complex.

Its subcellular location is the mitochondrion outer membrane. Component of the ERMES/MDM complex, which serves as a molecular tether to connect the endoplasmic reticulum and mitochondria. Components of this complex are involved in the control of mitochondrial shape and protein biogenesis and may function in phospholipid exchange. MDM10 is involved in the late assembly steps of the general translocase of the mitochondrial outer membrane (TOM complex). Functions in the TOM40-specific route of the assembly of outer membrane beta-barrel proteins, including the association of TOM40 with the receptor TOM22 and small TOM proteins. Can associate with the SAM(core) complex as well as the MDM12-MMM1 complex, both involved in late steps of the major beta-barrel assembly pathway, that is responsible for biogenesis of all outer membrane beta-barrel proteins. May act as a switch that shuttles between both complexes and channels precursor proteins into the TOM40-specific pathway. Plays a role in mitochondrial morphology and in the inheritance of mitochondria. The chain is Mitochondrial distribution and morphology protein 10 from Postia placenta (strain ATCC 44394 / Madison 698-R) (Brown rot fungus).